We begin with the raw amino-acid sequence, 379 residues long: Alcohol dehydrogenase class-3 (379 aa).

Zn(2+)-binding residues include cysteine 47, histidine 69, cysteine 99, cysteine 102, cysteine 105, cysteine 113, and cysteine 176.

Belongs to the zinc-containing alcohol dehydrogenase family. Class-III subfamily. As to quaternary structure, homodimer. Requires Zn(2+) as cofactor.

It localises to the cytoplasm. The catalysed reaction is a primary alcohol + NAD(+) = an aldehyde + NADH + H(+). It catalyses the reaction a secondary alcohol + NAD(+) = a ketone + NADH + H(+). It carries out the reaction S-(hydroxymethyl)glutathione + NADP(+) = S-formylglutathione + NADPH + H(+). The enzyme catalyses S-(hydroxymethyl)glutathione + NAD(+) = S-formylglutathione + NADH + H(+). Functionally, class-III ADH is remarkably ineffective in oxidizing ethanol, but it readily catalyzes the oxidation of long-chain primary alcohols and the oxidation of S-(hydroxymethyl) glutathione. The chain is Alcohol dehydrogenase class-3 (adh5) from Dictyostelium discoideum (Social amoeba).